Here is a 305-residue protein sequence, read N- to C-terminus: Ankyrin repeat domain-containing protein 23 (305 aa).

The stretch at 41-72 (QEAVAREKLKLEEEKKKKLERFNSTRFNLDNL) forms a coiled coil. Residues 83–92 (KKRLRHRVPP) show a composition bias toward basic residues. A disordered region spans residues 83–104 (KKRLRHRVPPRKPEPLVKPQSQ). ANK repeat units lie at residues 143-172 (LHRT…TVDA), 176-205 (LDRT…RVNA), 209-238 (IGST…HLNA), and 242-271 (EGDT…ELGV). An interaction with TTN region spans residues 178 to 195 (RTPVFWACRGGHLVILKQ).

In terms of assembly, interacts with titin/TTN and MYPN. As to expression, mainly expressed in heart, skeletal muscle and brown adipose tissues.

The protein localises to the nucleus. May be involved in the energy metabolism. Could be a molecular link between myofibrillar stretch-induced signaling pathways and muscle gene expression. The protein is Ankyrin repeat domain-containing protein 23 (ANKRD23) of Homo sapiens (Human).